A 465-amino-acid polypeptide reads, in one-letter code: Cerebellar degeneration-related protein 2-like (465 aa).

Coiled-coil stretches lie at residues 38 to 143 and 188 to 265; these read LLER…EQLR and LEQE…TYLL. The disordered stretch occupies residues 282-314; that stretch reads APEADDPQPGRGDDLGAQDGVSSPAASPGHVVR. S308, S318, and S344 each carry phosphoserine. The stretch at 350-377 forms a coiled coil; the sequence is MSILREVDEQYHALLEKYEELLSKCRQH. A disordered region spans residues 382-417; sequence RHAGVQTSRPISRDSSWRDLRGGEEGQGEVKAGEKS. The segment covering 392-405 has biased composition (basic and acidic residues); it reads ISRDSSWRDLRGGE.

It belongs to the CDR2 family.

The protein is Cerebellar degeneration-related protein 2-like (CDR2L) of Homo sapiens (Human).